The sequence spans 132 residues: U-scoloptoxin(11)-Sa1a (132 aa).

An N-terminal signal peptide occupies residues 1 to 19; the sequence is MIRFFAFVLFFATQELILC.

The protein belongs to the scoloptoxin-11 family. Post-translationally, contains 5 disulfide bonds. Expressed by the venom gland.

The protein localises to the secreted. The protein is U-scoloptoxin(11)-Sa1a of Scolopendra alternans (Florida Keys giant centipede).